A 91-amino-acid chain; its full sequence is MASVSISCPSCSATDGVVRNGKSTAGHQRYLCSHCRKTWQLQFTYTASQPGTHQKIIDMAMNGVGCRATARIMGVGLNTIFRHLKNSGRSR.

Belongs to the IS1 elements InsA family.

Its function is as follows. Absolutely required for transposition of IS1. This Escherichia coli (strain K12) protein is Insertion element IS1 2 protein InsA (insA2).